Reading from the N-terminus, the 350-residue chain is Vetispiradiene synthase 3 (350 aa).

Residues Asp-103, Asp-107, Asp-246, Thr-250, and Glu-254 each contribute to the Mg(2+) site. A DDXXD motif motif is present at residues 103 to 107 (DDTFD).

This sequence belongs to the terpene synthase family. Tpsa subfamily. It depends on Mg(2+) as a cofactor.

It localises to the cytoplasm. The catalysed reaction is (2E,6E)-farnesyl diphosphate = (-)-vetispiradiene + diphosphate. It participates in secondary metabolite biosynthesis; terpenoid biosynthesis. Its function is as follows. Sesquiterpene synthase that catalyzes the formation of vetispiradiene from trans,trans-farnesyl diphosphate. The initial internal cyclization produces the monocyclic intermediate germacrene A. This is Vetispiradiene synthase 3 from Hyoscyamus muticus (Egyptian henbane).